The following is a 714-amino-acid chain: Transcription factor SFL2 (714 aa).

Residues 15 to 134 (AFVHKLYTML…LVYIKRRSSS (120 aa)) mediate DNA binding. Disordered regions lie at residues 187–467 (YYQQ…VGVT), 565–658 (STSV…NNTN), and 670–714 (SHSQ…NMNK). Pro residues-rich tracts occupy residues 193–207 (GQVP…PPHQ) and 223–235 (QPPP…PPQP). Residues 266-275 (LDQTQPLSYT) show a composition bias toward polar residues. Residues 276–285 (PQLEYQQQQY) show a composition bias toward low complexity. Over residues 286 to 296 (PQPPLPPPPPQ) the composition is skewed to pro residues. 2 stretches are compositionally biased toward polar residues: residues 310-321 (DNLSRPSPNEQH) and 354-372 (SEGS…LNNE). Low complexity predominate over residues 376-389 (ESSTSSSSTTVTST). Polar residues-rich tracts occupy residues 413–435 (SRMN…TQNG) and 444–461 (LIPS…TGTD). Over residues 574–591 (GPFSTSTSTSTTSPTLSS) the composition is skewed to low complexity. Residues 599-608 (EPQNSTIANG) are compositionally biased toward polar residues. Low complexity-rich tracts occupy residues 609–641 (TSIR…RQLS) and 648–658 (QQQQQPNNNTN). Residues 703 to 714 (SKSDDDTDNMNK) are compositionally biased toward basic and acidic residues.

The protein belongs to the HSF family.

The protein resides in the nucleus. Transcription factor that plays a role of activator of filamentous growth and which is involved in invasive growth at a high temperature. Required for human oral epithelium colonization and damage. Promotes filamentous growth in EFG1- and FLO8-dependent manners. Antagonizes functions of SFL1. The chain is Transcription factor SFL2 (SFL2) from Candida albicans (strain SC5314 / ATCC MYA-2876) (Yeast).